We begin with the raw amino-acid sequence, 160 residues long: Inner membrane protein YcdZ (160 aa).

The next 5 membrane-spanning stretches (helical) occupy residues 20–42, 50–70, 72–92, 99–119, and 123–143; these read WGAV…YFAC, LLIS…IIHG, ALAP…AFLM, LLLS…AGQG, and LVLP…NSGL.

It to E.coli YahC.

Its subcellular location is the cell inner membrane. The chain is Inner membrane protein YcdZ (ycdZ) from Salmonella typhimurium (strain LT2 / SGSC1412 / ATCC 700720).